A 1063-amino-acid chain; its full sequence is Structural polyprotein (1063 aa).

The disordered stretch occupies residues 1–131; it reads MASTTPITME…LGPPTNPFQA (131 aa). Residues 30 to 69 form a human C1QBP/SF2P32-binding region; sequence GASQSRRPRPPRQRDSSTSGDDSGRDSGGPRRRRGNRGRG. Ser-46 bears the Phosphoserine; by host mark. Over residues 59-69 the composition is skewed to basic residues; the sequence is PRRRRGNRGRG. The span at 93–107 shows a compositional bias: pro residues; it reads APKPSRAPPQQPQPP. A disulfide bond links Cys-153 and Cys-197. Residues 279–300 are functions as E2 signal peptide; it reads GAPQAFLAGLLLAAVAVGTARA. The Extracellular portion of the chain corresponds to 301–534; sequence GLQPRADMAA…LWLATANALS (234 aa). The interval 305 to 347 is disordered; that stretch reads RADMAAPPAPPQPPCAHGQHYGHHHHQLPFLGHDGHHGGTLRV. 4 N-linked (GlcNAc...) asparagine; by host glycosylation sites follow: Asn-353, Asn-371, Asn-410, and Asn-429. The helical transmembrane segment at 535 to 555 threads the bilayer; that stretch reads LDHALAAFVLLFPWVLIFMVC. Topologically, residues 556-582 are cytoplasmic; that stretch reads RRACRRRGAAAALTAVVLQGYNPPAYG. Residues 563–582 form a functions as E1 signal peptide region; that stretch reads GAAAALTAVVLQGYNPPAYG. The Extracellular segment spans residues 583-1028; the sequence is EEAFTYLCTA…QTWAEWAAAH (446 aa). 8 disulfide bridges follow: Cys-590–Cys-595, Cys-619–Cys-824, Cys-641–Cys-653, Cys-699–Cys-712, Cys-758–Cys-767, Cys-807–Cys-817, Cys-931–Cys-934, and Cys-950–Cys-983. An N-linked (GlcNAc...) asparagine; by host glycan is attached at Asn-658. Residues Asn-670 and Ala-671 each contribute to the Ca(2+) site. Residues Asp-718 and Thr-719 each contribute to the Ca(2+) site. Asn-759 and Asn-791 each carry an N-linked (GlcNAc...) asparagine; by host glycan. O-linked (GalNAc...) threonine; by host glycans are attached at residues Thr-1011 and Thr-1012. A helical transmembrane segment spans residues 1029-1049; that stretch reads WWQLTLGAVCALLLAGLLACC. At 1050–1063 the chain is on the extracellular side; the sequence is AKCLYYLRGAIAPR.

In terms of assembly, homodimer; further assembles into homooligomer. Interacts with human C1QBP. Interacts (via N-terminus) with protease/methyltransferase p150. Heterodimer with spike glycoprotein E2. As to quaternary structure, heterodimer with spike glycoprotein E1. Structural polyprotein: Specific enzymatic cleavages in vivo yield mature proteins. Two signal peptidase-mediated cleavages within the polyprotein produce the structural proteins capsid, E2, and E1. The E2 signal peptide remains attached to the C-terminus of the capsid protein after cleavage by the signal peptidase. Another signal peptide at E2 C-terminus directs E1 to the ER, with a similar mechanism. Post-translationally, contains three N-linked oligosaccharides. In terms of processing, capsid is phosphorylated on Ser-46 by host. This phosphorylation negatively regulates capsid protein RNA-binding activity. Dephosphorylated by human PP1A.

It localises to the virion. The protein localises to the host cytoplasm. Its subcellular location is the host mitochondrion. It is found in the virion membrane. The protein resides in the host Golgi apparatus membrane. Its function is as follows. Capsid protein interacts with genomic RNA and assembles into icosahedric core particles 65-70 nm in diameter. The resulting nucleocapsid eventually associates with the cytoplasmic domain of E2 at the cell membrane, leading to budding and formation of mature virions from host Golgi membranes. Phosphorylation negatively regulates RNA-binding activity, possibly delaying virion assembly during the viral replication phase. Capsid protein dimerizes and becomes disulfide-linked in the virion. Modulates genomic RNA replication. Modulates subgenomic RNA synthesis by interacting with human C1QBP/SF2P32. Induces both perinuclear clustering of mitochondria and the formation of electron-dense intermitochondrial plaques, both hallmarks of rubella virus infected cells. Induces apoptosis when expressed in transfected cells. Functionally, responsible for viral attachment to target host cell, by binding to the cell receptor. Its transport to the plasma membrane depends on interaction with E1 protein. The surface glycoproteins display an irregular helical organization and a pseudo-tetrameric inner nucleocapsid arrangement. Class II viral fusion protein. Fusion activity is inactive as long as E1 is bound to E2 in mature virion. After virus attachment to target cell and clathrin-mediated endocytosis, acidification of the endosome would induce dissociation of E1/E2 heterodimer and concomitant trimerization of the E1 subunits. This E1 homotrimer is fusion active, and promotes release of viral nucleocapsid in cytoplasm after endosome and viral membrane fusion. The cytoplasmic tail of spike glycoprotein E1 modulates virus release. The surface glycoproteins display an irregular helical organization and a pseudo-tetrameric inner nucleocapsid arrangement. The polypeptide is Structural polyprotein (Rubella virus (strain RN-UK86) (RUBV)).